The following is a 458-amino-acid chain: Transcription factor PCF5 (458 aa).

Disordered stretches follow at residues 1-103 (MGDA…RGPR), 159-182 (GAGAGNAAAPPSSSTHPDSAENSD), 278-299 (MFHHQQHRHGGGGGGGNGTTQQ), and 424-458 (RLPARIQGDEEHNGGGGGNGDKPPPPSSVSSASHH). A compositionally biased stretch (gly residues) spans 65–74 (RGGGGGGGGE). Positions 89 to 147 (RKDRHSKVCTARGPRDRRVRLSAHTAIQFYDVQDRLGYDRPSKAVDWLIKNAKDAIDKL) constitute a TCP domain.

Forms homodimers and heterodimers.

Its subcellular location is the nucleus. Its function is as follows. Transcription activator. Binds the promoter core sequence 5'-GGNCC-3'. This Oryza sativa subsp. japonica (Rice) protein is Transcription factor PCF5 (PCF5).